The sequence spans 280 residues: Probable holocytochrome-c-type synthase (280 aa).

Positions 1 to 95 (MGSSQSTPKV…FALPTKREKS (95 aa)) are disordered. HRM repeat units lie at residues 35–40 (QCPLTP) and 56–61 (ACPVGA).

This sequence belongs to the cytochrome c-type heme lyase family.

It is found in the mitochondrion inner membrane. The enzyme catalyses holo-[cytochrome c] = apo-[cytochrome c] + heme b. Functionally, probable lyase that catalyzes the covalent linking of the heme group to the cytochrome C apoprotein to produce the mature functional cytochrome. This is Probable holocytochrome-c-type synthase (cchl-1) from Caenorhabditis elegans.